A 523-amino-acid polypeptide reads, in one-letter code: 2-isopropylmalate synthase (523 aa).

The Pyruvate carboxyltransferase domain maps to 5–267 (VIIFDTTLRD…HTNINHHEIW (263 aa)). Mn(2+) is bound by residues D14, H202, H204, and N238. Positions 392-523 (RLDYFSVQSG…HNKENNKEIV (132 aa)) are regulatory domain.

The protein belongs to the alpha-IPM synthase/homocitrate synthase family. LeuA type 1 subfamily. Homodimer. The cofactor is Mn(2+).

The protein localises to the cytoplasm. It carries out the reaction 3-methyl-2-oxobutanoate + acetyl-CoA + H2O = (2S)-2-isopropylmalate + CoA + H(+). It functions in the pathway amino-acid biosynthesis; L-leucine biosynthesis; L-leucine from 3-methyl-2-oxobutanoate: step 1/4. In terms of biological role, catalyzes the condensation of the acetyl group of acetyl-CoA with 3-methyl-2-oxobutanoate (2-ketoisovalerate) to form 3-carboxy-3-hydroxy-4-methylpentanoate (2-isopropylmalate). This is 2-isopropylmalate synthase from Salmonella arizonae (strain ATCC BAA-731 / CDC346-86 / RSK2980).